We begin with the raw amino-acid sequence, 180 residues long: Small ribosomal subunit protein uS4 (180 aa).

One can recognise an S4 RNA-binding domain in the interval Arg-103–Ala-174.

This sequence belongs to the universal ribosomal protein uS4 family. As to quaternary structure, part of the 30S ribosomal subunit. Contacts protein S5. The interaction surface between S4 and S5 is involved in control of translational fidelity.

Its function is as follows. One of the primary rRNA binding proteins, it binds directly to 16S rRNA where it nucleates assembly of the body of the 30S subunit. With S5 and S12 plays an important role in translational accuracy. The polypeptide is Small ribosomal subunit protein uS4 (Pyrococcus horikoshii (strain ATCC 700860 / DSM 12428 / JCM 9974 / NBRC 100139 / OT-3)).